The sequence spans 288 residues: NAD kinase (288 aa).

Residue Asp70 is the Proton acceptor of the active site. NAD(+) is bound by residues Asp70 to Gly71, Asn144 to Asp145, Arg155, Lys172, Asp174, Thr185 to Ser190, and Gln245.

The protein belongs to the NAD kinase family. A divalent metal cation serves as cofactor.

Its subcellular location is the cytoplasm. It catalyses the reaction NAD(+) + ATP = ADP + NADP(+) + H(+). In terms of biological role, involved in the regulation of the intracellular balance of NAD and NADP, and is a key enzyme in the biosynthesis of NADP. Catalyzes specifically the phosphorylation on 2'-hydroxyl of the adenosine moiety of NAD to yield NADP. In Citrifermentans bemidjiense (strain ATCC BAA-1014 / DSM 16622 / JCM 12645 / Bem) (Geobacter bemidjiensis), this protein is NAD kinase.